The sequence spans 115 residues: Probable K(+)/H(+) antiporter subunit C (115 aa).

The next 3 helical transmembrane spans lie at 4 to 21, 28 to 47, and 75 to 97; these read ILSAGIGTLTASGVYLLL, VIIGLSLLSFAVNLFIFGMG, and ALVLTAIVIGFAMTALFLVVLLA.

Belongs to the CPA3 antiporters (TC 2.A.63) subunit C family. In terms of assembly, may form a hetero-oligomeric complex that consists of six subunits: PhaAB, PhaC, PhaD, PhaE, PhaF and PhaG.

The protein localises to the cell membrane. Its function is as follows. Part of a K(+) efflux system which is required for the adaptation of R.meliloti to alkaline pH as well as for the infection process during symbiotic nodule development. The polypeptide is Probable K(+)/H(+) antiporter subunit C (phaC) (Rhizobium meliloti (strain 1021) (Ensifer meliloti)).